The primary structure comprises 138 residues: Small ribosomal subunit protein uS11 (138 aa).

A compositionally biased stretch (low complexity) spans 1–12; sequence MAQAKKGGTAAK. Disordered regions lie at residues 1 to 32 and 119 to 138; these read MAQA…AAHI and ISDV…RRRV. Residues 13 to 22 show a composition bias toward basic residues; sequence KGQKTRRREK.

This sequence belongs to the universal ribosomal protein uS11 family. As to quaternary structure, part of the 30S ribosomal subunit. Interacts with proteins S7 and S18. Binds to IF-3.

Located on the platform of the 30S subunit, it bridges several disparate RNA helices of the 16S rRNA. Forms part of the Shine-Dalgarno cleft in the 70S ribosome. The protein is Small ribosomal subunit protein uS11 of Mycolicibacterium smegmatis (strain ATCC 700084 / mc(2)155) (Mycobacterium smegmatis).